A 162-amino-acid chain; its full sequence is Lymphocyte antigen 86 (162 aa).

An N-terminal signal peptide occupies residues 1 to 19 (MNGVAAALLVWILTSPSSS). 3 cysteine pairs are disulfide-bonded: C33-C58, C45-C154, and C102-C112. A glycan (N-linked (GlcNAc...) asparagine) is linked at N96. Residue N156 is glycosylated (N-linked (GlcNAc...) asparagine).

In terms of assembly, M-shaped tetramer of two CD180-LY86 heterodimers. As to expression, highly expressed in spleen, liver, brain and thymus, and at lower levels in kidney.

The protein resides in the secreted. It is found in the extracellular space. Functionally, may cooperate with CD180 and TLR4 to mediate the innate immune response to bacterial lipopolysaccharide (LPS) and cytokine production. Important for efficient CD180 cell surface expression. The protein is Lymphocyte antigen 86 (Ly86) of Mus musculus (Mouse).